The sequence spans 372 residues: Probable NADH-dependent flavin oxidoreductase YqiG (372 aa).

This sequence belongs to the NADH:flavin oxidoreductase/NADH oxidase family.

The protein is Probable NADH-dependent flavin oxidoreductase YqiG (yqiG) of Bacillus subtilis (strain 168).